The chain runs to 883 residues: Coatomer subunit gamma (883 aa).

A disordered region spans residues 1 to 25 (MNYFSLTSHKKHRGHPSAGPSNAYQ). 6 HEAT repeats span residues 69–106 (REAT…IAED), 292–329 (RMLS…THPA), 331–364 (VTTC…GAES), 365–401 (SVER…KYPR), 404–439 (TVLM…ENAD), and 476–513 (ATPS…SCPA).

The protein belongs to the COPG family. As to quaternary structure, oligomeric complex that consists of at least the alpha, beta, beta', gamma, delta, epsilon and zeta subunits. As to expression, expressed in ovary, testis, testis tip, young spermatocytes, germ cells and follicle cells. Up-regulated expression within centrally to posteriorly located germarial cysts and in migrating follicle cells. Widespread expression in imaginal disks including eye-antennal disk, wing disk, third leg and haltere disk.

It localises to the cytoplasm. The protein resides in the golgi apparatus membrane. The protein localises to the cytoplasmic vesicle. Its subcellular location is the COPI-coated vesicle membrane. It is found in the endoplasmic reticulum. In terms of biological role, the coatomer is a cytosolic protein complex that binds to dilysine motifs and reversibly associates with Golgi non-clathrin-coated vesicles, which further mediate biosynthetic protein transport from the ER, via the Golgi up to the trans Golgi network. Coatomer complex is required for budding from Golgi membranes, and is essential for the retrograde Golgi-to-ER transport of dilysine-tagged proteins. Required for limiting lipid storage in lipid droplets. Involved in the expansion of luminal extracellular matrices and apical membrane during tubulogenesis. Required in the tracheal epithelium for luminal protein secretion and diametric tube growth. In salivary glands, required for deposition of O-glycans and luminal extracellular matrix assembly. Required for epidermal morphogenesis and cuticle development. The polypeptide is Coatomer subunit gamma (Drosophila melanogaster (Fruit fly)).